We begin with the raw amino-acid sequence, 277 residues long: S-formylglutathione hydrolase FrmB (277 aa).

Catalysis depends on charge relay system residues Ser-145, Asp-221, and His-254.

Belongs to the esterase D family.

It carries out the reaction S-formylglutathione + H2O = formate + glutathione + H(+). Its function is as follows. Serine hydrolase involved in the detoxification of formaldehyde. Hydrolyzes S-formylglutathione to glutathione and formate. The protein is S-formylglutathione hydrolase FrmB (frmB) of Escherichia coli O139:H28 (strain E24377A / ETEC).